Here is a 457-residue protein sequence, read N- to C-terminus: Argininosuccinate lyase (457 aa).

This sequence belongs to the lyase 1 family. Argininosuccinate lyase subfamily.

Its subcellular location is the cytoplasm. It carries out the reaction 2-(N(omega)-L-arginino)succinate = fumarate + L-arginine. It functions in the pathway amino-acid biosynthesis; L-arginine biosynthesis; L-arginine from L-ornithine and carbamoyl phosphate: step 3/3. This is Argininosuccinate lyase from Escherichia coli O127:H6 (strain E2348/69 / EPEC).